The chain runs to 553 residues: Mucolipin-3 (553 aa).

Residues 1-62 (MADPEVVVSS…FWARGRKPWK (62 aa)) lie on the Cytoplasmic side of the membrane. The tract at residues 52–62 (KFWARGRKPWK) is interaction with phosphoinositides. Residues 63 to 83 (LAIQILKIAMVTIQLVLFGLS) traverse the membrane as a helical segment. Residues 84-283 (NQMVVAFKEE…VSGSIQKNTH (200 aa)) lie on the Extracellular side of the membrane. Residues 104-118 (KGYMDRMDDTYAVYT) are extracellular/lumenal pore loop. 3 N-linked (GlcNAc...) asparagine glycosylation sites follow: N138, N172, and N205. A disulfide bond links C159 and C185. A disulfide bridge links C238 with C269. Residues 284–304 (YMMIFDAFVILTCLVSLILCI) traverse the membrane as a helical segment. Topologically, residues 305–341 (RSVIRGLQLQQEFVNFFLLHYKKEVSVSDQMEFVNGW) are cytoplasmic. A helical transmembrane segment spans residues 342-362 (YIMIIISDILTIIGSILKMEI). Residues 363 to 371 (QAKSLTSYD) lie on the Extracellular side of the membrane. The chain crosses the membrane as a helical span at residues 372 to 392 (VCSILLGTSTMLVWLGVIRYL). Residues 393-414 (GFFAKYNLLILTLQAALPNVIR) are Cytoplasmic-facing. The chain crosses the membrane as a helical span at residues 415–435 (FCCCAAMIYLGYCFCGWIVLG). At 436–443 (PYHDKFRS) the chain is on the extracellular side. Residues 444–464 (LNMVSECLFSLINGDDMFATF) constitute an intramembrane region (pore-forming). The Selectivity filter signature appears at 456-459 (NGDD). Over 465–475 (AKMQQKSYLVW) the chain is Extracellular. A helical membrane pass occupies residues 476–497 (LFSRIYLYSFISLFIYMILSLF). At 498-553 (IALITDTYETIKQYQQDGFPETELRTFISECKDLPNSGKYRLEDDPPVSLFCCCKK) the chain is on the cytoplasmic side.

It belongs to the transient receptor (TC 1.A.4) family. Polycystin subfamily. MCOLN3 sub-subfamily. Homotetramer. Can heterooligomerize with MCOLN1; heteromeric assemblies have different channel properties as compared to the respective homooligomers and may be tissue-specific. May heterooligomerize with TRPV5 to form a functional distinct ion channel. Interacts with GABARAPL2. In terms of processing, N-glycosylated.

The protein localises to the cell membrane. Its subcellular location is the early endosome membrane. The protein resides in the late endosome membrane. It is found in the lysosome membrane. It localises to the cytoplasmic vesicle. The protein localises to the autophagosome membrane. The catalysed reaction is Ca(2+)(in) = Ca(2+)(out). It catalyses the reaction K(+)(in) = K(+)(out). It carries out the reaction Na(+)(in) = Na(+)(out). With respect to regulation, channel activity is activated by PtdIns(3,5)P2 (phosphatidylinositol 3,5-bisphosphate). Inhibited by lumenal H(+) and Na(+). The channel pore shows dynamic behavior and undergoes spontaneous, Ca(2+)-dependent modulation when conducting Ca(2+). Its function is as follows. Nonselective cation channel probably playing a role in the regulation of membrane trafficking events. Acts as a Ca(2+)-permeable cation channel with inwardly rectifying activity. Mediates release of Ca(2+) from endosomes to the cytoplasm, contributes to endosomal acidification and is involved in the regulation of membrane trafficking and fusion in the endosomal pathway. Also permeable to Mg(2+), Na(+) and K(+). Does not seem to act as mechanosensory transduction channel in inner ear sensory hair cells. Proposed to play a critical role at the cochlear stereocilia ankle-link region during hair-bundle growth. Involved in the regulation of autophagy. Through association with GABARAPL2 may be involved in autophagosome formation possibly providing Ca(2+) for the fusion process. Through a possible and probably tissue-specific heteromerization with MCOLN1 may be at least in part involved in many lysosome-dependent cellular events. Possible heteromeric ion channel assemblies with TRPV5 show pharmacological similarity with TRPML3. This is Mucolipin-3 (MCOLN3) from Homo sapiens (Human).